We begin with the raw amino-acid sequence, 361 residues long: DNA replication and repair protein RecF (361 aa).

Position 30–37 (30–37) interacts with ATP; it reads GDNAQGKT.

The protein belongs to the RecF family.

It is found in the cytoplasm. Its function is as follows. The RecF protein is involved in DNA metabolism; it is required for DNA replication and normal SOS inducibility. RecF binds preferentially to single-stranded, linear DNA. It also seems to bind ATP. This is DNA replication and repair protein RecF from Clostridium botulinum (strain Eklund 17B / Type B).